The following is a 362-amino-acid chain: Serine/threonine-protein phosphatase 2A activator 1 (362 aa).

The segment covering 1 to 10 (MQPHTQPPQP) has biased composition (pro residues). 2 disordered regions span residues 1 to 28 (MQPH…APPR) and 339 to 362 (NVEE…PWAR). A compositionally biased stretch (basic and acidic residues) spans 340–351 (VEERGDKNEGKG).

It belongs to the PTPA-type PPIase family.

It localises to the cytoplasm. It is found in the nucleus. The enzyme catalyses [protein]-peptidylproline (omega=180) = [protein]-peptidylproline (omega=0). PPIases accelerate the folding of proteins. It catalyzes the cis-trans isomerization of proline imidic peptide bonds in oligopeptides. Acts as a regulatory subunit for PP2A-like phosphatases modulating their activity or substrate specificity, probably by inducing a conformational change in the catalytic subunit, a direct target of the PPIase. Can reactivate inactive phosphatase PP2A-phosphatase methylesterase complexes (PP2Ai) in presence of ATP and Mg(2+) by dissociating the inactive form from the complex. The protein is Serine/threonine-protein phosphatase 2A activator 1 (RRD1) of Cryptococcus neoformans var. neoformans serotype D (strain B-3501A) (Filobasidiella neoformans).